Consider the following 74-residue polypeptide: ATP synthase subunit 9, mitochondrial (74 aa).

2 helical membrane-spanning segments follow: residues 8-28 and 50-70; these read IGAG…GNVF and ILGF…AFLI.

Belongs to the ATPase C chain family. As to quaternary structure, F-type ATPases have 2 components, CF(1) - the catalytic core - and CF(0) - the membrane proton channel. CF(1) has five subunits: alpha(3), beta(3), gamma(1), delta(1), epsilon(1). CF(0) has three main subunits: a, b and c.

It is found in the mitochondrion membrane. In terms of biological role, this protein is one of the chains of the nonenzymatic membrane component (F0) of mitochondrial ATPase. In Triticum aestivum (Wheat), this protein is ATP synthase subunit 9, mitochondrial (ATP9).